Here is a 430-residue protein sequence, read N- to C-terminus: Type II methyltransferase M.Sau96I (430 aa).

The HTH cro/C1-type domain occupies Ile-9–Ile-63. Residues Tyr-99–Phe-429 form the SAM-dependent MTase C5-type domain. The active site involves Cys-174.

Belongs to the class I-like SAM-binding methyltransferase superfamily. C5-methyltransferase family.

It catalyses the reaction a 2'-deoxycytidine in DNA + S-adenosyl-L-methionine = a 5-methyl-2'-deoxycytidine in DNA + S-adenosyl-L-homocysteine + H(+). In terms of biological role, a methylase that recognizes the double-stranded sequence 5'-GGNCC-3', methylates C-4 on both strands, and protects the DNA from cleavage by the Sau96I endonuclease. The sequence is that of Type II methyltransferase M.Sau96I from Staphylococcus aureus.